The primary structure comprises 355 residues: Glucose-6-phosphatase 2 (355 aa).

Topologically, residues 1 to 24 (MDFLHRNGVLIIQHLQKDYRAYYT) are lumenal. A helical membrane pass occupies residues 25–45 (FLNFMSNVGDPRNIFFIYFPL). Residues 46-56 (CFQFNQTVGTK) are Cytoplasmic-facing. A helical transmembrane segment spans residues 57–77 (MIWVAVIGDWLNLIFKWILFG). Residues 78–115 (HRPYWWVQETQIYPNHSSPCLEQFPTTCETGPGSPSGH) are Lumenal-facing. Substrate is bound at residue R79. N92 is a glycosylation site (N-linked (GlcNAc...) asparagine). Catalysis depends on H115, which acts as the Proton donor. A helical transmembrane segment spans residues 116-136 (AMGASCVWYVMVTAALSHTVC). Over 137-146 (GMDKFSITLH) the chain is Cytoplasmic. A helical membrane pass occupies residues 147–167 (RLTWSFLWSVFWLIQISVCIS). Position 168 (R168) is a topological domain, lumenal. Substrate is bound at residue R168. A helical transmembrane segment spans residues 169-189 (VFIATHFPHQVILGVIGGMLV). H174 (nucleophile) is an active-site residue. Topologically, residues 190–211 (AEAFEHTPGIQTASLGTYLKTN) are cytoplasmic. A helical membrane pass occupies residues 212-232 (LFLFLFAVGFYLLLRVLNIDL). The Lumenal portion of the chain corresponds to 233-261 (LWSVPIAKKWCANPDWIHIDTTPFAGLVR). Residues 262–282 (NLGVLFGLGFAINSEMFLLSC) traverse the membrane as a helical segment. Residues 283 to 293 (RGGNNYTLSFR) are Cytoplasmic-facing. A helical membrane pass occupies residues 294–314 (LLCALTSLTILQLYHFLQIPT). Residues 315-318 (HEEH) lie on the Lumenal side of the membrane. The helical transmembrane segment at 319–339 (LFYVLSFCKSASIPLTVVAFI) threads the bilayer. Topologically, residues 340-355 (PYSVHMLMKQSGKKSQ) are cytoplasmic. Positions 352 to 355 (KKSQ) match the Prevents secretion from ER motif.

This sequence belongs to the glucose-6-phosphatase family. Post-translationally, N-glycosylated; the non-glycosylated form is more unstable and is degraded through the proteasome. Specifically expressed in pancreas and also detected to a lower extent in testis. Expressed by most islet cells in the pancreas (at protein level).

Its subcellular location is the endoplasmic reticulum membrane. The catalysed reaction is D-glucose 6-phosphate + H2O = D-glucose + phosphate. It functions in the pathway carbohydrate biosynthesis; gluconeogenesis. Functionally, may hydrolyze glucose-6-phosphate to glucose in the endoplasmic reticulum. May be responsible for glucose production through glycogenolysis and gluconeogenesis. The protein is Glucose-6-phosphatase 2 (G6PC2) of Homo sapiens (Human).